The primary structure comprises 366 residues: tRNA pseudouridine synthase B (366 aa).

The disordered stretch occupies residues 1 to 55; sequence MTVTTPDALLAPHDVQHAGADESAAQIRKPRDNNDPRNANRGGGNGKPRRDKRDV. Asp92 serves as the catalytic Nucleophile.

Belongs to the pseudouridine synthase TruB family. Type 1 subfamily.

It catalyses the reaction uridine(55) in tRNA = pseudouridine(55) in tRNA. In terms of biological role, responsible for synthesis of pseudouridine from uracil-55 in the psi GC loop of transfer RNAs. The chain is tRNA pseudouridine synthase B from Rhodopseudomonas palustris (strain ATCC BAA-98 / CGA009).